A 317-amino-acid polypeptide reads, in one-letter code: MSGTNPGEADGGAADAVLIAGPTASGKSALALSLAERTGGIVINTDSMQVYRDLRIITARPTPDEEARVPHRLYGHVDADVNCSAGMWVADAAAALEEALAQNRLPIFAGGSGLYFKALTRGLSAVPPIPSQVRDDVRARLERDGAEALHAVLARRDPAAAQRLKPRDRARIARALEVVEATGRSLTDWHRDGLPPLLPPDKVRAIFLAPDREALYARIDARFGAMLAAGALEEVRALAERHLDPLLPAMKAHGVPALMRHLRGEISLEEAAEIGRADTRHYAKRQFTWFRHQLPEFRWTSPEEAEAQLSCVIPGPR.

ATP is bound at residue 21-28 (GPTASGKS). 23–28 (TASGKS) provides a ligand contact to substrate. Positions 46–49 (DSMQ) are interaction with substrate tRNA.

Belongs to the IPP transferase family. As to quaternary structure, monomer. Mg(2+) is required as a cofactor.

It carries out the reaction adenosine(37) in tRNA + dimethylallyl diphosphate = N(6)-dimethylallyladenosine(37) in tRNA + diphosphate. Functionally, catalyzes the transfer of a dimethylallyl group onto the adenine at position 37 in tRNAs that read codons beginning with uridine, leading to the formation of N6-(dimethylallyl)adenosine (i(6)A). This is tRNA dimethylallyltransferase from Nitrobacter hamburgensis (strain DSM 10229 / NCIMB 13809 / X14).